A 130-amino-acid chain; its full sequence is Small ribosomal subunit protein uS9 (130 aa).

Belongs to the universal ribosomal protein uS9 family.

This chain is Small ribosomal subunit protein uS9, found in Pectobacterium atrosepticum (strain SCRI 1043 / ATCC BAA-672) (Erwinia carotovora subsp. atroseptica).